The primary structure comprises 227 residues: Ribosome-recycling factor, chloroplastic (227 aa).

A chloroplast-targeting transit peptide spans 1 to 34; it reads WTAAANYVKIKVGTGKFARKTVVLSQKRTGTLKC. Positions 167–212 form a coiled coil; the sequence is KVALRNIRRDAIKSYDKLEKEKKLSEDNVKDLSSDLQKVIDEYIKK.

The protein belongs to the RRF family.

It is found in the plastid. It localises to the chloroplast. Responsible for the release of ribosomes from messenger RNA at the termination of chloroplastic protein biosynthesis. This Daucus carota (Wild carrot) protein is Ribosome-recycling factor, chloroplastic (RRF).